The sequence spans 88 residues: DNA-directed RNA polymerase subunit omega (88 aa).

This sequence belongs to the RNA polymerase subunit omega family. In terms of assembly, the RNAP catalytic core consists of 2 alpha, 1 beta, 1 beta' and 1 omega subunit. When a sigma factor is associated with the core the holoenzyme is formed, which can initiate transcription.

It carries out the reaction RNA(n) + a ribonucleoside 5'-triphosphate = RNA(n+1) + diphosphate. In terms of biological role, promotes RNA polymerase assembly. Latches the N- and C-terminal regions of the beta' subunit thereby facilitating its interaction with the beta and alpha subunits. This chain is DNA-directed RNA polymerase subunit omega, found in Anaeromyxobacter sp. (strain Fw109-5).